The primary structure comprises 157 residues: MSSAICPCGSGDLLLACCGRYHAGQPAPGAEKLMRSRYSAYVLGLTDYLVQTTLPVQQGGLDREAIAQWSAQSTWLGLEVESSEVFGGKPEHAFVTFTARWHDGNGEHSHRERSSFVQNQGRWYFIDSTVPLKAGRNDACPCGSEQKFKKCCSAYVE.

It belongs to the UPF0225 family.

The polypeptide is UPF0225 protein Psyr_3863 (Pseudomonas syringae pv. syringae (strain B728a)).